The chain runs to 208 residues: MSFISNPNIHFYLLAYFIGGIPFGYLLSRFFYNINLQEVGSGSIGATNVLRALKERDPKKAKMMAALTMLLDALKGALVILVAKMAGMSVETQWAIAVLAVVGHCFSPYLKLEGGKGVATGLGVMAVMLPLEAAIGLVVWLVVGKTLKISSLSSLLGLGALLISSFLIHPEIPEIGTHAPLLIIAFVIFYKHIPNLVRLFQGKEGRVV.

The next 6 membrane-spanning stretches (helical) occupy residues 7-27, 63-83, 86-106, 123-143, 149-169, and 170-190; these read PNIH…GYLL, MMAA…ILVA, AGMS…GHCF, GVMA…WLVV, ISSL…FLIH, and PEIP…VIFY.

It belongs to the PlsY family. Probably interacts with PlsX.

The protein resides in the cell inner membrane. The enzyme catalyses an acyl phosphate + sn-glycerol 3-phosphate = a 1-acyl-sn-glycero-3-phosphate + phosphate. It participates in lipid metabolism; phospholipid metabolism. Its function is as follows. Catalyzes the transfer of an acyl group from acyl-phosphate (acyl-PO(4)) to glycerol-3-phosphate (G3P) to form lysophosphatidic acid (LPA). This enzyme utilizes acyl-phosphate as fatty acyl donor, but not acyl-CoA or acyl-ACP. This Wolinella succinogenes (strain ATCC 29543 / DSM 1740 / CCUG 13145 / JCM 31913 / LMG 7466 / NCTC 11488 / FDC 602W) (Vibrio succinogenes) protein is Glycerol-3-phosphate acyltransferase.